The following is a 265-amino-acid chain: Mlc titration factor A (265 aa).

Residues His111, His148, His152, and Glu211 each contribute to the Zn(2+) site.

It belongs to the MtfA family. As to quaternary structure, interacts with Mlc. Requires Zn(2+) as cofactor.

Its subcellular location is the cytoplasm. Its function is as follows. Involved in the modulation of the activity of the glucose-phosphotransferase system (glucose-PTS). Interacts with the transcriptional repressor Mlc, preventing its interaction with DNA and leading to the modulation of expression of genes regulated by Mlc, including ptsG, which encodes the PTS system glucose-specific EIICB component. Functionally, shows zinc-dependent metallopeptidase activity. This chain is Mlc titration factor A, found in Escherichia coli O17:K52:H18 (strain UMN026 / ExPEC).